A 181-amino-acid chain; its full sequence is Regulator of G-protein signaling 5 (181 aa).

The 117-residue stretch at 64-180 (SLDKLLQNNY…VRSEFYQEFI (117 aa)) folds into the RGS domain.

The protein resides in the cytoplasm. Its subcellular location is the membrane. Functionally, inhibits signal transduction by increasing the GTPase activity of G protein alpha subunits thereby driving them into their inactive GDP-bound form. Binds to G(i)-alpha and G(o)-alpha, but not to G(s)-alpha. This chain is Regulator of G-protein signaling 5 (RGS5), found in Sus scrofa (Pig).